A 426-amino-acid chain; its full sequence is Chaperone SurA (426 aa).

Residues 1–19 (MGRVLVTIFVLFWPIGSFA) form the signal peptide. PpiC domains follow at residues 169–270 (DAQY…KLLD) and 280–379 (VTQT…QVLD).

Its subcellular location is the periplasm. The enzyme catalyses [protein]-peptidylproline (omega=180) = [protein]-peptidylproline (omega=0). In terms of biological role, chaperone involved in the correct folding and assembly of outer membrane proteins. Recognizes specific patterns of aromatic residues and the orientation of their side chains, which are found more frequently in integral outer membrane proteins. May act in both early periplasmic and late outer membrane-associated steps of protein maturation. In Nitrosococcus oceani (strain ATCC 19707 / BCRC 17464 / JCM 30415 / NCIMB 11848 / C-107), this protein is Chaperone SurA.